The sequence spans 306 residues: tRNA pseudouridine synthase B (306 aa).

The active-site Nucleophile is the aspartate 43.

The protein belongs to the pseudouridine synthase TruB family. Type 1 subfamily.

The enzyme catalyses uridine(55) in tRNA = pseudouridine(55) in tRNA. Functionally, responsible for synthesis of pseudouridine from uracil-55 in the psi GC loop of transfer RNAs. The chain is tRNA pseudouridine synthase B from Anaplasma marginale (strain St. Maries).